Reading from the N-terminus, the 504-residue chain is Cystathionine beta-synthase (504 aa).

Residues cysteine 12 and histidine 23 each coordinate heme. Residue lysine 78 is modified to N6-(pyridoxal phosphate)lysine. Pyridoxal 5'-phosphate-binding positions include asparagine 108, 215 to 219, and serine 307; that span reads GTGGT. 2 consecutive CBS domains span residues 375-434 and 442-498; these read LSFD…IVKC and MVKQ…NGTS.

This sequence belongs to the cysteine synthase/cystathionine beta-synthase family. As to quaternary structure, homodimer. The cofactor is pyridoxal 5'-phosphate.

The catalysed reaction is L-homocysteine + L-serine = L,L-cystathionine + H2O. It participates in amino-acid biosynthesis; L-cysteine biosynthesis; L-cysteine from L-homocysteine and L-serine: step 1/2. Has no response to S-adenosyl-methionine/AdoMet, unlike mammalian orthologs. Binds non-covalently to a heme group that may control the redox sensitivity of the enzyme. Its function is as follows. Hydro-lyase catalyzing the first step of the transsulfuration pathway, where the hydroxyl group of L-serine is displaced by L-homocysteine in a beta-replacement reaction to form L-cystathionine, the precursor of L-cysteine. This Apis mellifera (Honeybee) protein is Cystathionine beta-synthase.